The primary structure comprises 206 residues: 7-methyl-GTP pyrophosphatase (206 aa).

Aspartate 82 acts as the Proton acceptor in catalysis.

This sequence belongs to the Maf family. YceF subfamily. It depends on a divalent metal cation as a cofactor.

Its subcellular location is the cytoplasm. The enzyme catalyses N(7)-methyl-GTP + H2O = N(7)-methyl-GMP + diphosphate + H(+). Its function is as follows. Nucleoside triphosphate pyrophosphatase that hydrolyzes 7-methyl-GTP (m(7)GTP). May have a dual role in cell division arrest and in preventing the incorporation of modified nucleotides into cellular nucleic acids. This Shewanella denitrificans (strain OS217 / ATCC BAA-1090 / DSM 15013) protein is 7-methyl-GTP pyrophosphatase.